A 198-amino-acid chain; its full sequence is HTH-type transcriptional regulator BetI (198 aa).

An HTH tetR-type domain is found at 8-68 (PLRRRELIDA…ATMRHLLREL (61 aa)). The segment at residues 31 to 50 (TVAQIAHEAGVSPALAHHYF) is a DNA-binding region (H-T-H motif).

It functions in the pathway amine and polyamine biosynthesis; betaine biosynthesis via choline pathway [regulation]. Functionally, repressor involved in the biosynthesis of the osmoprotectant glycine betaine. It represses transcription of the choline transporter BetT and the genes of BetAB involved in the synthesis of glycine betaine. The polypeptide is HTH-type transcriptional regulator BetI (Brucella melitensis biotype 2 (strain ATCC 23457)).